Here is an 874-residue protein sequence, read N- to C-terminus: Alanine--tRNA ligase (874 aa).

Positions 564, 568, 665, and 669 each coordinate Zn(2+).

This sequence belongs to the class-II aminoacyl-tRNA synthetase family. Zn(2+) serves as cofactor.

It is found in the cytoplasm. It catalyses the reaction tRNA(Ala) + L-alanine + ATP = L-alanyl-tRNA(Ala) + AMP + diphosphate. Catalyzes the attachment of alanine to tRNA(Ala) in a two-step reaction: alanine is first activated by ATP to form Ala-AMP and then transferred to the acceptor end of tRNA(Ala). Also edits incorrectly charged Ser-tRNA(Ala) and Gly-tRNA(Ala) via its editing domain. This is Alanine--tRNA ligase from Burkholderia lata (strain ATCC 17760 / DSM 23089 / LMG 22485 / NCIMB 9086 / R18194 / 383).